Here is a 237-residue protein sequence, read N- to C-terminus: Ribose-5-phosphate isomerase A (237 aa).

Substrate contacts are provided by residues 33–36 (TGST), 90–93 (DGAD), and 103–106 (KGGG). Glu112 acts as the Proton acceptor in catalysis. Residue Lys130 participates in substrate binding.

It belongs to the ribose 5-phosphate isomerase family. In terms of assembly, homodimer.

The enzyme catalyses aldehydo-D-ribose 5-phosphate = D-ribulose 5-phosphate. Its pathway is carbohydrate degradation; pentose phosphate pathway; D-ribose 5-phosphate from D-ribulose 5-phosphate (non-oxidative stage): step 1/1. Its function is as follows. Catalyzes the reversible conversion of ribose-5-phosphate to ribulose 5-phosphate. This is Ribose-5-phosphate isomerase A from Gloeothece citriformis (strain PCC 7424) (Cyanothece sp. (strain PCC 7424)).